The following is a 396-amino-acid chain: Gamma-D-glutamyl-L-diamino acid endopeptidase 1 (396 aa).

LysM domains lie at 1–45 and 51–95; these read MDIL…RIQI and TSYT…TIQV. In terms of domain architecture, Peptidase M14 spans 108–394; the sequence is QNYDYSMMMN…EALGIFLAGL (287 aa). Residues histidine 162 and glutamate 165 each contribute to the Zn(2+) site. Aspartate 255 lines the substrate pocket. Histidine 307 contacts Zn(2+). Tyrosine 347 acts as the Proton donor in catalysis. The Proton donor/acceptor role is filled by glutamate 366.

This sequence belongs to the peptidase M14 family. The cofactor is Zn(2+).

It carries out the reaction Hydrolysis of gamma-D-glutamyl bonds to the L-terminus (position 7) of meso-diaminopimelic acid (meso-A2pm) in 7-(L-Ala-gamma-D-Glu)-meso-A2pm and 7-(L-Ala-gamma-D-Glu)-7-(D-Ala)-meso-A2pm. It is required that the D-terminal amino and carboxy groups of meso-A2pm are unsubstituted.. An endopeptidase which hydrolyzes the gamma-D-Glu-(L)meso-diaminopimelic acid bond of L-Ala-gamma-D-Glu-(L)meso-diaminopimelic acid and L-Ala-gamma-D-Glu-(L)meso-diaminopimelic acid(L)-D-Ala peptides. It is active on spore cortex peptidoglycan. This is Gamma-D-glutamyl-L-diamino acid endopeptidase 1 from Lysinibacillus sphaericus (Bacillus sphaericus).